A 430-amino-acid polypeptide reads, in one-letter code: Probable beta-1,3-galactosyl-O-glycosyl-glycoprotein beta-1,6-N-acetylglucosaminyltransferase 7 (430 aa).

Topologically, residues 1–8 are cytoplasmic; the sequence is MSQLRATK. The chain crosses the membrane as a helical; Signal-anchor for type II membrane protein span at residues 9–25; sequence SGLVVRAVICIFIFLYL. Over 26–430 the chain is Extracellular; that stretch reads RNPTPAESEE…QSHFNMRLNR (405 aa). 4 disulfides stabilise this stretch: Cys-53–Cys-205, Cys-139–Cys-354, Cys-160–Cys-187, and Cys-363–Cys-395. Residue Asn-87 is glycosylated (N-linked (GlcNAc...) asparagine). Asn-272 carries an N-linked (GlcNAc...) asparagine glycan.

This sequence belongs to the glycosyltransferase 14 family.

The protein localises to the golgi apparatus membrane. It participates in protein modification; protein glycosylation. Its function is as follows. Probable glycosyltransferase. This is Probable beta-1,3-galactosyl-O-glycosyl-glycoprotein beta-1,6-N-acetylglucosaminyltransferase 7 from Homo sapiens (Human).